The chain runs to 2646 residues: Probable inactive serine/threonine-protein kinase roco10 (2646 aa).

Disordered regions lie at residues 28 to 122, 138 to 168, 205 to 248, 281 to 457, 477 to 516, 605 to 656, and 882 to 907; these read LNYS…LSGG, NIPI…KDKD, PLFI…VSPS, QQQR…VKQA, MSKL…HTSP, TSPN…PHQY, and QSSS…STPS. The span at 46–56 shows a compositional bias: polar residues; it reads PQQNLLENDTL. Composition is skewed to low complexity over residues 78–115, 147–161, and 215–228; these read IITT…TSPS, SPTS…NNNN, and SRNN…GGNK. A compositionally biased stretch (polar residues) spans 235 to 248; that stretch reads KISSTSAAGDVSPS. Composition is skewed to low complexity over residues 285-297 and 325-334; these read NGNN…NNNN and NNNNNNNNNN. The segment covering 335–345 has biased composition (polar residues); the sequence is KQPQHPMNGNH. Residues 346 to 394 show a composition bias toward low complexity; that stretch reads SPSNGTSGSLSMSGSGIDNGGNNNNNSNTHGSSSNQSSGVTSPIIQSTS. 2 stretches are compositionally biased toward polar residues: residues 402–416 and 428–443; these read GLNS…SSPT and TSAS…PLMN. Composition is skewed to low complexity over residues 444–454, 491–516, 605–627, 634–651, and 883–907; these read STGVSSSSSGV, PSSP…HTSP, TSPN…NSSP, QQQQ…NTNT, and SSSS…STPS. In terms of domain architecture, Rho-GAP spans 585–807; that stretch reads SSISPISTAA…MFIQQADILF (223 aa). LRR repeat units follow at residues 968-987, 989-1011, 1012-1033, 1040-1061, 1062-1083, 1085-1108, 1109-1131, 1132-1154, 1155-1176, 1178-1199, 1201-1222, 1224-1247, 1248-1270, 1271-1298, and 1303-1327; these read QKLD…IKQL, DLQE…ARLT, SLRT…MADF, NLEN…YTWL, KLKT…IFQI, TLEV…CTST, KLRS…INLV, ELQV…QKLT, SLTE…LLLL, NLKK…IHRM, SLIE…IVAL, KLNS…YIQK, GKEG…YRTR, IIML…SFSS, and LPSL…ILDI. In terms of domain architecture, Roc spans 1262-1474; that stretch reads TNVPCYRTRI…RDIKQMIAKN (213 aa). Disordered regions lie at residues 1293–1317, 1651–1670, and 1957–2026; these read KSSF…SNNS, NNNN…SRSM, and NNSS…KEKE. Over residues 1651-1669 the composition is skewed to low complexity; it reads NNNNSNGNNVGRGRSGSRS. Positions 1966–1975 are enriched in polar residues; that stretch reads PIASSRSNPK. Over residues 1983–1996 the composition is skewed to low complexity; the sequence is NLIQSNNNDNNNSL. Over residues 1997-2026 the composition is skewed to basic and acidic residues; that stretch reads SKKDLKELAKQNKEKEKEKEKDKDKEKEKE. One can recognise a Protein kinase domain in the interval 2049–2342; that stretch reads FSICHFIKEI…PSKIISQLYT (294 aa). ATP-binding positions include 2055–2063 and Lys2094; that span reads IKEIDYREI. Residues 2412-2536 form the RGS domain; sequence MVVLNNKQST…FTVPTTNKNG (125 aa).

The protein belongs to the protein kinase superfamily. TKL Ser/Thr protein kinase family. ROCO subfamily.

The polypeptide is Probable inactive serine/threonine-protein kinase roco10 (roco10) (Dictyostelium discoideum (Social amoeba)).